Consider the following 388-residue polypeptide: MKWLLLLGLVALSECIIHKVPLVRKKSLRRNLSEHGLLKDFLKKHNFNPASKYFPQAEAPTLIDEQPLENYLDMEYFGTIGIGTPAQDFTVIFDTGSSNLWVPSVYCSSLACTNHNRFNPQDSSTYQSTSGTVSITYGTGSMTGILGYDTVQVGGISDTNQIFGLSETEPGSFLYYAPFDGILGLAYPSISSSGATPVFDNIWNQGLVSQDLFSVYLSADDQSGSVVIFGGIDSSYYTGSLNWVPVSVEGYWQISVDSITMNGEAIACAEGCQAIVDTGTSLLTGPTSPIANIQSDIGASENSDGEMVVSCSAISSLPDIVFTINGIQYPVPPSAYILQSQGSCISGFQGMDVPTESGELWILGDVFIRQYFTVFDRANNQVGLAPVA.

Positions 1–15 (MKWLLLLGLVALSEC) are cleaved as a signal peptide. 2 propeptides (activation peptide) span residues 16-40 (IIHK…LLKD) and 41-62 (FLKK…APTL). The region spanning 76–385 (YFGTIGIGTP…DRANNQVGLA (310 aa)) is the Peptidase A1 domain. Asp94 is an active-site residue. Cysteines 107 and 112 form a disulfide. Ser130 is modified (phosphoserine). The cysteines at positions 268 and 272 are disulfide-linked. Asp277 is a catalytic residue. Cysteines 311 and 344 form a disulfide.

Belongs to the peptidase A1 family. In terms of processing, pepsin A-2 is phosphorylated, but not pepsin A-3. Each pepsinogen is converted to corresponding pepsin at pH 2.0 in part as a result of the release of a 47 AA activation segment and in part as a result of stepwise proteolytic cleavage via an intermediate form(s).

The protein resides in the secreted. The enzyme catalyses Preferential cleavage: hydrophobic, preferably aromatic, residues in P1 and P1' positions. Cleaves 1-Phe-|-Val-2, 4-Gln-|-His-5, 13-Glu-|-Ala-14, 14-Ala-|-Leu-15, 15-Leu-|-Tyr-16, 16-Tyr-|-Leu-17, 23-Gly-|-Phe-24, 24-Phe-|-Phe-25 and 25-Phe-|-Tyr-26 bonds in the B chain of insulin.. In terms of biological role, shows particularly broad specificity; although bonds involving phenylalanine and leucine are preferred, many others are also cleaved to some extent. This is Pepsin A-2/A-3 from Macaca fuscata fuscata (Japanese macaque).